A 333-amino-acid chain; its full sequence is SPbeta prophage-derived recombinase-like protein YomM (333 aa).

The region spanning 30 to 113 (EEHRNLVQEF…GVSSLNNYIE (84 aa)) is the Core-binding (CB) domain. The Tyr recombinase domain occupies 142–332 (YEKVKVTYDD…DFEEEKNQIF (191 aa)). Active-site residues include R180, K211, H281, and H308. The O-(3'-phospho-DNA)-tyrosine intermediate role is filled by Y319.

Belongs to the 'phage' integrase family.

The sequence is that of SPbeta prophage-derived recombinase-like protein YomM (yomM) from Bacillus subtilis (strain 168).